The sequence spans 361 residues: S-adenosylmethionine:tRNA ribosyltransferase-isomerase (361 aa).

The protein belongs to the QueA family. In terms of assembly, monomer.

Its subcellular location is the cytoplasm. The catalysed reaction is 7-aminomethyl-7-carbaguanosine(34) in tRNA + S-adenosyl-L-methionine = epoxyqueuosine(34) in tRNA + adenine + L-methionine + 2 H(+). It functions in the pathway tRNA modification; tRNA-queuosine biosynthesis. Functionally, transfers and isomerizes the ribose moiety from AdoMet to the 7-aminomethyl group of 7-deazaguanine (preQ1-tRNA) to give epoxyqueuosine (oQ-tRNA). The protein is S-adenosylmethionine:tRNA ribosyltransferase-isomerase of Rhizobium johnstonii (strain DSM 114642 / LMG 32736 / 3841) (Rhizobium leguminosarum bv. viciae).